Reading from the N-terminus, the 192-residue chain is MLGLRLIVGLGNPGSEYIKTRHNAGFRFVDGLVQREGQCWALESKLFAYVARVFIAGQWVWLLRPVTFMNLSGKSICAGLNFWKIKPEQMLVAHDELDFPPGAVRLKFDGGHGGQNGLRDITKLLGHGRFHRLRVGIGHPGHKDRVVSWVLGCPTCDENIAIDAALERASVVLPLAVAGDFDGAMKKLHTVV.

Tyrosine 17 is a tRNA binding site. The active-site Proton acceptor is the histidine 22. Residues phenylalanine 68, asparagine 70, and asparagine 116 each contribute to the tRNA site.

It belongs to the PTH family. Monomer.

The protein localises to the cytoplasm. The catalysed reaction is an N-acyl-L-alpha-aminoacyl-tRNA + H2O = an N-acyl-L-amino acid + a tRNA + H(+). Functionally, hydrolyzes ribosome-free peptidyl-tRNAs (with 1 or more amino acids incorporated), which drop off the ribosome during protein synthesis, or as a result of ribosome stalling. In terms of biological role, catalyzes the release of premature peptidyl moieties from peptidyl-tRNA molecules trapped in stalled 50S ribosomal subunits, and thus maintains levels of free tRNAs and 50S ribosomes. This Xylella fastidiosa (strain Temecula1 / ATCC 700964) protein is Peptidyl-tRNA hydrolase.